The primary structure comprises 1293 residues: Enterobactin synthase component F (1293 aa).

The segment at 1–301 (MSQHLPLVAA…NVLPLGIHIA (301 aa)) is elongation/condensation. The adenylatione stretch occupies residues 482–887 (SYREMREQVV…ALPDVEQAVT (406 aa)). In terms of domain architecture, Carrier spans 971–1046 (APKAGSETII…KLATIIDAEE (76 aa)). Ser1006 bears the O-(pantetheine 4'-phosphoryl)serine mark. The thioesterase stretch occupies residues 1066–1293 (PTLFCFHPAS…GPIIRATLNR (228 aa)). The active-site Proton acceptor; for thioesterase activity is His1271.

Belongs to the ATP-dependent AMP-binding enzyme family. EntF subfamily. Proteins EntB, EntD, EntE and EntF are the component of the enterobactin synthase. Components probably do not form a stable complex. EntF acts as a catalytic monomer. Interacts with the MbtH-like protein YbdZ. YbdZ binds to the adenylation domain, but does not alter the structure of the domain. Pantetheine 4'-phosphate is required as a cofactor. Post-translationally, 4'-phosphopantetheine is transferred from CoA to a specific serine of apo-EntF by EntD. Holo-EntF so formed is then acylated with seryl-AMP.

Its subcellular location is the cytoplasm. It catalyses the reaction 3 2,3-dihydroxybenzoate + 3 L-serine + 6 ATP = enterobactin + 6 AMP + 6 diphosphate + 4 H(+). The catalysed reaction is holo-[peptidyl-carrier protein] + L-serine + ATP = L-seryl-[peptidyl-carrier protein] + AMP + diphosphate. It participates in siderophore biosynthesis; enterobactin biosynthesis. With respect to regulation, adenylation activity is increased in the presence of the MbtH-like protein YbdZ. Its function is as follows. Involved in the biosynthesis of the siderophore enterobactin (enterochelin), which is a macrocyclic trimeric lactone of N-(2,3-dihydroxybenzoyl)-serine. EntF catalyzes the activation of L-serine via ATP-dependent PPi exchange reaction to form seryladenylate. Activated L-serine is loaded onto the peptidyl carrier domain via a thioester linkage to the phosphopanthetheine moiety, forming seryl-S-Ppant-EntF. EntF acts then as the sole catalyst for the formation of the three amide and three ester linkages found in enterobactin, using seryladenylate and 2,3-dihydroxybenzoate-S-Ppant-EntB (DHB-S-Ppant-EntB) as substrates, via the formation of a DHB-Ser-S-Ppant-EntF intermediate. The sequence is that of Enterobactin synthase component F from Escherichia coli (strain K12).